Here is a 508-residue protein sequence, read N- to C-terminus: Phytepsin (508 aa).

An N-terminal signal peptide occupies residues 1–27 (MGTRGLALALLAAVLLLQTVLPAASEA). A propeptide spans 28 to 66 (EGLVRIALKKRPIDRNSRVATGLSGGEEQPLLSGANPLR) (activation peptide). Positions 84 to 505 (YFGEIGVGTP…DYGKLRIGFA (422 aa)) constitute a Peptidase A1 domain. Asp-102 is a catalytic residue. 2 cysteine pairs are disulfide-bonded: Cys-115–Cys-121 and Cys-280–Cys-284. Residue Asp-289 is part of the active site. Residues 314 to 419 (VVSQECKTIV…NQLCNRLPSP (106 aa)) form the Saposin B-type domain. 4 disulfides stabilise this stretch: Cys-319–Cys-413, Cys-344–Cys-385, Cys-350–Cys-382, and Cys-427–Cys-464. A glycan (N-linked (GlcNAc...) asparagine) is linked at Asn-399.

The protein belongs to the peptidase A1 family. Heterodimer of two subunits (29 kDa and 11 kDa) processed from the precursor molecule. A large enzyme (32 kDa and 16 kDa) is an intermediate precursor form. Embryo and leaf.

The protein resides in the vacuole. The catalysed reaction is Prefers hydrophobic residues Phe, Val, Ile, Leu, and Ala at P1 and P1', but also cleaves -Phe-|-Asp- and -Asp-|-Asp- bonds in 2S albumin from plant seeds.. Involved in the breakdown of propeptides of storage proteins in protein-storage vacuoles. In Hordeum vulgare (Barley), this protein is Phytepsin.